A 401-amino-acid polypeptide reads, in one-letter code: Dihydrolipoyllysine-residue succinyltransferase component of 2-oxoglutarate dehydrogenase complex (401 aa).

Residues 2–77 (SVKIIVPSLG…AVGEEIGEIN (76 aa)) enclose the Lipoyl-binding domain. At lysine 43 the chain carries N6-lipoyllysine. A Peripheral subunit-binding (PSBD) domain is found at 115-152 (ILAPSVQKLVTENKLDPNNIKGTGRDGRITKGDVLETI). Catalysis depends on residues histidine 372 and aspartate 376.

This sequence belongs to the 2-oxoacid dehydrogenase family. As to quaternary structure, forms a 24-polypeptide structural core with octahedral symmetry. Part of the 2-oxoglutarate dehydrogenase (OGDH) complex composed of E1 (2-oxoglutarate dehydrogenase), E2 (dihydrolipoamide succinyltransferase) and E3 (dihydrolipoamide dehydrogenase); the complex contains multiple copies of the three enzymatic components (E1, E2 and E3). (R)-lipoate is required as a cofactor.

The enzyme catalyses N(6)-[(R)-dihydrolipoyl]-L-lysyl-[protein] + succinyl-CoA = N(6)-[(R)-S(8)-succinyldihydrolipoyl]-L-lysyl-[protein] + CoA. It functions in the pathway amino-acid degradation; L-lysine degradation via saccharopine pathway; glutaryl-CoA from L-lysine: step 6/6. E2 component of the 2-oxoglutarate dehydrogenase (OGDH) complex which catalyzes the second step in the conversion of 2-oxoglutarate to succinyl-CoA and CO(2). In Rickettsia felis (strain ATCC VR-1525 / URRWXCal2) (Rickettsia azadi), this protein is Dihydrolipoyllysine-residue succinyltransferase component of 2-oxoglutarate dehydrogenase complex (sucB).